Here is a 217-residue protein sequence, read N- to C-terminus: UPF0319 protein VS_II0881 (217 aa).

The N-terminal stretch at 1 to 21 is a signal peptide; sequence MKTIQSIALLSAIVAAPSVLA.

The protein belongs to the UPF0319 family.

In Vibrio atlanticus (strain LGP32) (Vibrio splendidus (strain Mel32)), this protein is UPF0319 protein VS_II0881.